The chain runs to 246 residues: Proteasome subunit alpha type-6 (246 aa).

Belongs to the peptidase T1A family. As to quaternary structure, the 26S proteasome consists of a 20S proteasome core and two 19S regulatory subunits. The 20S proteasome core is composed of 28 subunits that are arranged in four stacked rings, resulting in a barrel-shaped structure. The two end rings are each formed by seven alpha subunits, and the two central rings are each formed by seven beta subunits. The catalytic chamber with the active sites is on the inside of the barrel.

It localises to the cytoplasm. It is found in the nucleus. Functionally, the proteasome is a multicatalytic proteinase complex which is characterized by its ability to cleave peptides with Arg, Phe, Tyr, Leu, and Glu adjacent to the leaving group at neutral or slightly basic pH. The proteasome has an ATP-dependent proteolytic activity. The sequence is that of Proteasome subunit alpha type-6 (PAA1) from Nicotiana tabacum (Common tobacco).